A 200-amino-acid chain; its full sequence is LHFPL tetraspan subfamily member 6 protein (200 aa).

The N-terminal stretch at methionine 1–serine 23 is a signal peptide. The next 3 membrane-spanning stretches (helical) occupy residues isoleucine 84 to leucine 104, glycine 123 to tryptophan 143, and isoleucine 166 to tryptophan 186.

The protein belongs to the LHFP family.

Its subcellular location is the membrane. This is LHFPL tetraspan subfamily member 6 protein from Mus musculus (Mouse).